The sequence spans 85 residues: MVKIRLTRGGAKKRPFYHIIVTDVRSARDGRNIERLGYYNPVAQGAEPRVVLDTARVDHWVGNGAQLTDKVRNLYREAKSQAAAA.

The protein belongs to the bacterial ribosomal protein bS16 family.

This is Small ribosomal subunit protein bS16 from Xanthomonas oryzae pv. oryzae (strain PXO99A).